Reading from the N-terminus, the 52-residue chain is Stable plasmid inheritance protein (52 aa).

A helical transmembrane segment spans residues Ser6–Thr26.

The protein belongs to the Hok/Gef family.

Its subcellular location is the cell inner membrane. In terms of biological role, toxic component of a type I toxin-antitoxin (TA) system. Part of the plasmid maintenance system, encodes a toxic protein that collapses the transmembrane potential and arrests respiration. When the adjacent non-translated flmB (sok) gene is disrupted FlmA no longer functions in plasmid maintenance (i.e. FlmB probably encodes an antisense antitoxin RNA). Translation of FlmA may be coupled to the upstream flmC gene. In Escherichia coli O157:H7, this protein is Stable plasmid inheritance protein (flmA).